Reading from the N-terminus, the 356-residue chain is Cyclin-A1-4 (356 aa).

It belongs to the cyclin family. Cyclin AB subfamily.

The sequence is that of Cyclin-A1-4 (CYCA1-4) from Oryza sativa subsp. japonica (Rice).